The primary structure comprises 673 residues: Outer spore wall assembly protein SHE10 (673 aa).

Residues 1–24 (MRRVRGVGNLLVTILVVLIGFKQA) form the signal peptide. The stretch at 503–568 (ILRSQANIAF…LALEQGQGQE (66 aa)) forms a coiled coil. 2 disordered regions span residues 530-551 (LEQE…AENE) and 587-673 (TPLG…SQAN). 2 stretches are compositionally biased toward acidic residues: residues 593-605 (DNTD…DDAD) and 612-629 (GDSE…EEDA). Residues 617 to 647 (NFYDSYEGDEEDASRELERLERESAERETLD) are a coiled coil. Residues 630-673 (SRELERLERESAERETLDRLELGQRQKLQEEQHRDELHHSSQAN) show a composition bias toward basic and acidic residues.

This sequence belongs to the SHE10 family. In terms of assembly, component of the mitochondria-localized RNase mitochondrial RNA-processing (RNase MRP) composed of one single RNA encoded by the NME1 gene and at least 31 proteins. Absent in the nucleus-localized RNase MRP (NuMRP).

The protein localises to the mitochondrion. Its function is as follows. Involved in spore wall assembly. May be a component of the mitochondrial RNase MRP (MtMRP), a ribonucleoprotein endoribonuclease involved in the cleaving RNA transcripts to generate primers for DNA replication in mitochondria. In Lachancea thermotolerans (strain ATCC 56472 / CBS 6340 / NRRL Y-8284) (Yeast), this protein is Outer spore wall assembly protein SHE10.